The chain runs to 185 residues: Ribosome-recycling factor (185 aa).

The protein belongs to the RRF family.

Its subcellular location is the cytoplasm. Its function is as follows. Responsible for the release of ribosomes from messenger RNA at the termination of protein biosynthesis. May increase the efficiency of translation by recycling ribosomes from one round of translation to another. This Neisseria gonorrhoeae (strain ATCC 700825 / FA 1090) protein is Ribosome-recycling factor.